The primary structure comprises 337 residues: Protein-methionine-sulfoxide reductase catalytic subunit MsrP (337 aa).

A signal peptide (tat-type signal) is located at residues 1–48; that stretch reads MLIKIPSRSDCSESEVTSETLYLSRRRLLGASFAGLALASGLPRLGFA. Mo-molybdopterin is bound by residues Asn-94, 97-98, Cys-152, Thr-187, Asn-237, Arg-242, and 253-255; these read YE and SIK.

It belongs to the MsrP family. In terms of assembly, heterodimer of a catalytic subunit (MsrP) and a heme-binding subunit (MsrQ). The cofactor is Mo-molybdopterin. Predicted to be exported by the Tat system. The position of the signal peptide cleavage has not been experimentally proven.

The protein resides in the periplasm. The enzyme catalyses L-methionyl-[protein] + a quinone + H2O = L-methionyl-(S)-S-oxide-[protein] + a quinol. The catalysed reaction is L-methionyl-[protein] + a quinone + H2O = L-methionyl-(R)-S-oxide-[protein] + a quinol. Part of the MsrPQ system that repairs oxidized periplasmic proteins containing methionine sulfoxide residues (Met-O), using respiratory chain electrons. Thus protects these proteins from oxidative-stress damage caused by reactive species of oxygen and chlorine generated by the host defense mechanisms. MsrPQ is essential for the maintenance of envelope integrity under bleach stress, rescuing a wide series of structurally unrelated periplasmic proteins from methionine oxidation. The catalytic subunit MsrP is non-stereospecific, being able to reduce both (R-) and (S-) diastereoisomers of methionine sulfoxide. In Pseudomonas aeruginosa (strain ATCC 15692 / DSM 22644 / CIP 104116 / JCM 14847 / LMG 12228 / 1C / PRS 101 / PAO1), this protein is Protein-methionine-sulfoxide reductase catalytic subunit MsrP.